Consider the following 316-residue polypeptide: MDFVRPHLLAIEGLHPPEIHALLDLAESYALLNRSGKTQRDLLRGRTLINLFFEDSTRTRTSFELAGKRLGADVINMSVSTSSVNKGETLLDTASTLNAMHCDLLVVRHSQSGAPNLLAQKVDAAVINAGDGTHEHPTQALLDALTIRRHKGRLEGLTVAICGDVLHSRVARSNIYLLASLGSQVRLIGPPTLIPGAADRLGVEVFHDMDRGLDGADVVMMLRLQRERMKSGLVPSEREYFRFFGLNEARLAKAKPDAIIMHPGPMNRGVEIESRVADDPVRSVIKEQVEMGVAVRMAVLDALARQRSRLPSSRPV.

Positions 58 and 59 each coordinate carbamoyl phosphate. Lysine 86 lines the L-aspartate pocket. Carbamoyl phosphate is bound by residues arginine 108, histidine 136, and glutamine 139. L-aspartate is bound by residues arginine 169 and arginine 223. The carbamoyl phosphate site is built by glycine 264 and proline 265.

The protein belongs to the aspartate/ornithine carbamoyltransferase superfamily. ATCase family. In terms of assembly, heterododecamer (2C3:3R2) of six catalytic PyrB chains organized as two trimers (C3), and six regulatory PyrI chains organized as three dimers (R2).

It carries out the reaction carbamoyl phosphate + L-aspartate = N-carbamoyl-L-aspartate + phosphate + H(+). It functions in the pathway pyrimidine metabolism; UMP biosynthesis via de novo pathway; (S)-dihydroorotate from bicarbonate: step 2/3. Catalyzes the condensation of carbamoyl phosphate and aspartate to form carbamoyl aspartate and inorganic phosphate, the committed step in the de novo pyrimidine nucleotide biosynthesis pathway. This chain is Aspartate carbamoyltransferase catalytic subunit, found in Granulibacter bethesdensis (strain ATCC BAA-1260 / CGDNIH1).